A 237-amino-acid polypeptide reads, in one-letter code: 2,3,4,5-tetrahydropyridine-2,6-dicarboxylate N-acetyltransferase (237 aa).

The protein belongs to the transferase hexapeptide repeat family. DapH subfamily.

It carries out the reaction (S)-2,3,4,5-tetrahydrodipicolinate + acetyl-CoA + H2O = L-2-acetamido-6-oxoheptanedioate + CoA. The protein operates within amino-acid biosynthesis; L-lysine biosynthesis via DAP pathway; LL-2,6-diaminopimelate from (S)-tetrahydrodipicolinate (acetylase route): step 1/3. In terms of biological role, catalyzes the transfer of an acetyl group from acetyl-CoA to tetrahydrodipicolinate. The sequence is that of 2,3,4,5-tetrahydropyridine-2,6-dicarboxylate N-acetyltransferase from Alkaliphilus metalliredigens (strain QYMF).